The sequence spans 351 residues: Glycerol-3-phosphate dehydrogenase 1-like protein (351 aa).

Position 12–17 (12–17 (GSGNWG)) interacts with NAD(+). Substrate is bound at residue lysine 122. An NAD(+)-binding site is contributed by alanine 155. Lysine 206 functions as the Proton acceptor in the catalytic mechanism. NAD(+) is bound by residues arginine 271, lysine 298, and glutamine 300. 271–272 (RN) is a substrate binding site.

This sequence belongs to the NAD-dependent glycerol-3-phosphate dehydrogenase family. As to quaternary structure, interacts with SCN5A. In terms of tissue distribution, most highly expressed in heart tissue, with lower levels in the skeletal muscle, kidney, lung and other organs.

Its subcellular location is the cytoplasm. The enzyme catalyses sn-glycerol 3-phosphate + NAD(+) = dihydroxyacetone phosphate + NADH + H(+). Plays a role in regulating cardiac sodium current; decreased enzymatic activity with resulting increased levels of glycerol 3-phosphate activating the DPD1L-dependent SCN5A phosphorylation pathway, may ultimately lead to decreased sodium current; cardiac sodium current may also be reduced due to alterations of NAD(H) balance induced by DPD1L. This chain is Glycerol-3-phosphate dehydrogenase 1-like protein, found in Homo sapiens (Human).